Here is a 571-residue protein sequence, read N- to C-terminus: RNA polymerase sigma factor SigA (571 aa).

Positions 321–391 (MVESNLRLVI…TRAIADQART (71 aa)) are sigma-70 factor domain-2. The Interaction with polymerase core subunit RpoC motif lies at 345 to 348 (DLIQ). The sigma-70 factor domain-3 stretch occupies residues 400–476 (ETINKVLRGA…DTAVESPAEA (77 aa)). A sigma-70 factor domain-4 region spans residues 489–542 (VLKTLTDRERFVLIHRFGLLDGRPKTLEEVGSAFNVTRERIRQIEAKALRKMRH). The segment at residues 515–534 (LEEVGSAFNVTRERIRQIEA) is a DNA-binding region (H-T-H motif).

The protein belongs to the sigma-70 factor family. RpoD/SigA subfamily. Interacts transiently with the RNA polymerase catalytic core.

The protein resides in the cytoplasm. Its function is as follows. Sigma factors are initiation factors that promote the attachment of RNA polymerase to specific initiation sites and are then released. This sigma factor is the primary sigma factor during exponential growth. This Chlamydia muridarum (strain MoPn / Nigg) protein is RNA polymerase sigma factor SigA.